We begin with the raw amino-acid sequence, 271 residues long: Indole-3-glycerol phosphate synthase (271 aa).

This sequence belongs to the TrpC family.

It catalyses the reaction 1-(2-carboxyphenylamino)-1-deoxy-D-ribulose 5-phosphate + H(+) = (1S,2R)-1-C-(indol-3-yl)glycerol 3-phosphate + CO2 + H2O. It functions in the pathway amino-acid biosynthesis; L-tryptophan biosynthesis; L-tryptophan from chorismate: step 4/5. This chain is Indole-3-glycerol phosphate synthase, found in Haloarcula marismortui (strain ATCC 43049 / DSM 3752 / JCM 8966 / VKM B-1809) (Halobacterium marismortui).